The sequence spans 260 residues: Coiled-coil domain-containing protein 127 (260 aa).

A coiled-coil region spans residues Gln49 to Gln135.

In Homo sapiens (Human), this protein is Coiled-coil domain-containing protein 127 (CCDC127).